We begin with the raw amino-acid sequence, 161 residues long: Cyclic pyranopterin monophosphate synthase (161 aa).

Residues 75-77 and 115-116 contribute to the substrate site; these read MCH and ME. Aspartate 130 is a catalytic residue.

It belongs to the MoaC family. In terms of assembly, homohexamer; trimer of dimers.

The catalysed reaction is (8S)-3',8-cyclo-7,8-dihydroguanosine 5'-triphosphate = cyclic pyranopterin phosphate + diphosphate. The protein operates within cofactor biosynthesis; molybdopterin biosynthesis. Its function is as follows. Catalyzes the conversion of (8S)-3',8-cyclo-7,8-dihydroguanosine 5'-triphosphate to cyclic pyranopterin monophosphate (cPMP). This Bacillus cereus (strain 03BB102) protein is Cyclic pyranopterin monophosphate synthase.